The following is a 320-amino-acid chain: Beta-carotene ketolase (320 aa).

It catalyses the reaction all-trans-beta-carotene + 2 AH2 + 2 O2 = echinenone + 2 A + 3 H2O. It carries out the reaction echinenone + 2 AH2 + 2 O2 = canthaxanthin + 2 A + 3 H2O. It participates in carotenoid biosynthesis; astaxanthin biosynthesis. Its function is as follows. Converts beta-carotene to canthaxanthin via echinenone. This Haematococcus lacustris (Green alga) protein is Beta-carotene ketolase.